Reading from the N-terminus, the 112-residue chain is Peptidyl-tRNA hydrolase (112 aa).

A disordered region spans residues 64-99 (EEAKRAGLPTGLISDAGRTQLEPGTPTALAIGPAPD).

The protein belongs to the PTH2 family.

Its subcellular location is the cytoplasm. The catalysed reaction is an N-acyl-L-alpha-aminoacyl-tRNA + H2O = an N-acyl-L-amino acid + a tRNA + H(+). Its function is as follows. The natural substrate for this enzyme may be peptidyl-tRNAs which drop off the ribosome during protein synthesis. The chain is Peptidyl-tRNA hydrolase from Halobacterium salinarum (strain ATCC 29341 / DSM 671 / R1).